An 83-amino-acid polypeptide reads, in one-letter code: Small ribosomal subunit protein bS20 (83 aa).

This sequence belongs to the bacterial ribosomal protein bS20 family.

In terms of biological role, binds directly to 16S ribosomal RNA. The sequence is that of Small ribosomal subunit protein bS20 from Staphylococcus haemolyticus (strain JCSC1435).